The chain runs to 265 residues: Neuronal membrane glycoprotein M6-b (265 aa).

Residues 31-51 (GGVPYASLVATILCFSGVALF) form a helical membrane-spanning segment. N73 carries an N-linked (GlcNAc...) asparagine glycan. Helical transmembrane passes span 90-110 (VIYG…AEGF) and 136-156 (FVFL…FSAV). Residue N177 is glycosylated (N-linked (GlcNAc...) asparagine). The chain crosses the membrane as a helical span at residues 224–244 (LFIVACAGAGATVIALLIYMM). Phosphoserine is present on S257.

This sequence belongs to the myelin proteolipid protein family. In terms of assembly, interacts with SERT. As to expression, highly expressed in the ventral medullary surface, moderately in the cerebral cortex and cerebellum, poorly in lung and kidney, and not at all in heart, skeletal muscle, liver, stomach or stomach.

Its subcellular location is the membrane. The protein localises to the cell membrane. Its function is as follows. May be involved in neural development. Involved in regulation of osteoblast function and bone formation. Involved in matrix vesicle release by osteoblasts; this function seems to involve maintenance of the actin cytoskeleton. May be involved in cellular trafficking of SERT and thereby in regulation of serotonin uptake. This Rattus norvegicus (Rat) protein is Neuronal membrane glycoprotein M6-b (Gpm6b).